A 422-amino-acid chain; its full sequence is CinA-like protein (422 aa).

This sequence belongs to the CinA family.

In Mycolicibacterium vanbaalenii (strain DSM 7251 / JCM 13017 / BCRC 16820 / KCTC 9966 / NRRL B-24157 / PYR-1) (Mycobacterium vanbaalenii), this protein is CinA-like protein.